The primary structure comprises 167 residues: NADH-quinone oxidoreductase subunit B 2 (167 aa).

Positions 38, 39, 103, and 132 each coordinate [4Fe-4S] cluster.

This sequence belongs to the complex I 20 kDa subunit family. As to quaternary structure, NDH-1 is composed of 14 different subunits. Subunits NuoB, C, D, E, F, and G constitute the peripheral sector of the complex. [4Fe-4S] cluster serves as cofactor.

It localises to the cell inner membrane. The enzyme catalyses a quinone + NADH + 5 H(+)(in) = a quinol + NAD(+) + 4 H(+)(out). In terms of biological role, NDH-1 shuttles electrons from NADH, via FMN and iron-sulfur (Fe-S) centers, to quinones in the respiratory chain. The immediate electron acceptor for the enzyme in this species is believed to be ubiquinone. Couples the redox reaction to proton translocation (for every two electrons transferred, four hydrogen ions are translocated across the cytoplasmic membrane), and thus conserves the redox energy in a proton gradient. The protein is NADH-quinone oxidoreductase subunit B 2 of Rhizobium etli (strain CIAT 652).